Reading from the N-terminus, the 433-residue chain is Tubulin epsilon and delta complex protein 2 (433 aa).

Disordered regions lie at residues Thr-45–Pro-69, Thr-95–Gly-169, and Gln-326–Gly-345. Polar residues predominate over residues Lys-107–Ser-120. A Phosphoserine modification is found at Ser-159. The span at Pro-327–Ala-339 shows a compositional bias: pro residues.

Interacts with TEDC1. Found in a complex with TEDC1, TEDC2, TUBE1 and TUBD1.

It localises to the cell projection. The protein localises to the cilium. Its subcellular location is the cytoplasm. It is found in the cytoskeleton. The protein resides in the microtubule organizing center. It localises to the centrosome. The protein localises to the centriole. Functionally, acts as a positive regulator of ciliary hedgehog signaling. Required for centriole stability. The protein is Tubulin epsilon and delta complex protein 2 of Homo sapiens (Human).